The primary structure comprises 341 residues: L-threonine 3-dehydrogenase (341 aa).

Cysteine 38 is a binding site for Zn(2+). Residues threonine 40 and histidine 43 each act as charge relay system in the active site. Zn(2+) is bound by residues histidine 63, glutamate 64, cysteine 93, cysteine 96, cysteine 99, and cysteine 107. NAD(+) contacts are provided by residues isoleucine 175, aspartate 195, arginine 200, 262–264, and 286–287; these read LGI and IY.

The protein belongs to the zinc-containing alcohol dehydrogenase family. In terms of assembly, homotetramer. The cofactor is Zn(2+).

It localises to the cytoplasm. It catalyses the reaction L-threonine + NAD(+) = (2S)-2-amino-3-oxobutanoate + NADH + H(+). The protein operates within amino-acid degradation; L-threonine degradation via oxydo-reductase pathway; glycine from L-threonine: step 1/2. Functionally, catalyzes the NAD(+)-dependent oxidation of L-threonine to 2-amino-3-ketobutyrate. In Shigella dysenteriae serotype 1 (strain Sd197), this protein is L-threonine 3-dehydrogenase.